The primary structure comprises 276 residues: Halorhodopsin (276 aa).

Residues 1-20 constitute a propeptide that is removed on maturation; the sequence is MTAASTTATTVLQATQSDVL. Q21 is subject to Pyrrolidone carboxylic acid. A run of 7 helical transmembrane segments spans residues 31-51, 61-81, 109-129, 134-154, 162-182, 195-215, and 220-240; these read SSIW…VAMG, LIWV…AGLA, YLTW…LADT, LFTA…AALI, WVFY…LLVQ, IFGT…ILWA, and GVAL…DILA. An N6-(retinylidene)lysine modification is found at K241.

Belongs to the archaeal/bacterial/fungal opsin family. Post-translationally, the covalent binding of retinal to the apoprotein, bacterioopsin, generates bacteriorhodopsin.

Its subcellular location is the membrane. Its function is as follows. Light-driven chloride pump. This chain is Halorhodopsin (hop), found in Haloarcula marismortui (strain ATCC 43049 / DSM 3752 / JCM 8966 / VKM B-1809) (Halobacterium marismortui).